A 2210-amino-acid chain; its full sequence is RNA-directed RNA polymerase L (2210 aa).

The segment at 26–284 is endonuclease; that stretch reads RDIFLSQHHP…SHKDSDVPSC (259 aa). Mn(2+)-binding residues include Glu51, Asp89, and Glu102. Lys115 is a catalytic residue. One can recognise a RdRp catalytic domain in the interval 1171–1368; the sequence is CDMKMAVNNG…FLSSKLNKFI (198 aa). Asp1329 contacts Mg(2+).

It belongs to the Bunyavirales RNA polymerase family. Homomultimer; the oligomeric structure is essential for the polymerase activity. Interacts with nucleoprotein N. Interacts with protein Z; this interaction inhibits viral transcription and replication, Z partially blocks the product exit tunnel for the releasing nascent RNA product. The cofactor is Mn(2+). Mg(2+) is required as a cofactor.

The protein localises to the virion. Its subcellular location is the host cytoplasm. It catalyses the reaction RNA(n) + a ribonucleoside 5'-triphosphate = RNA(n+1) + diphosphate. RNA-dependent RNA polymerase, which is responsible for the replication and transcription of the viral RNA genome using antigenomic RNA as an intermediate. During transcription, synthesizes subgenomic RNAs and assures their capping by a cap-snatching mechanism, which involves the endonuclease activity cleaving the host capped pre-mRNAs. These short capped RNAs are then used as primers for viral transcription. The 3'-end of subgenomic mRNAs molecules are heterogeneous and not polyadenylated. The replicase function is to direct synthesis of antigenomic and genomic RNA which are encapsidated and non capped. As a consequence of the use of the same enzyme for both transcription and replication, these mechanisms need to be well coordinated. These processes may be regulated by proteins N and Z in a dose-dependent manner. Z protein inhibits the viral polymerase L und thus the viral transcription and RNA synthesis. This is RNA-directed RNA polymerase L from Junin mammarenavirus (JUNV).